The sequence spans 360 residues: Endolytic murein transglycosylase (360 aa).

The helical transmembrane segment at 16–36 (IILSSIVVLFLIIGGAFLYGK) threads the bilayer.

It belongs to the transglycosylase MltG family.

The protein resides in the cell membrane. The catalysed reaction is a peptidoglycan chain = a peptidoglycan chain with N-acetyl-1,6-anhydromuramyl-[peptide] at the reducing end + a peptidoglycan chain with N-acetylglucosamine at the non-reducing end.. Its function is as follows. Functions as a peptidoglycan terminase that cleaves nascent peptidoglycan strands endolytically to terminate their elongation. The polypeptide is Endolytic murein transglycosylase (Bacillus subtilis (strain 168)).